The following is a 94-amino-acid chain: Cell division protein CrgA (94 aa).

Transmembrane regions (helical) follow at residues 31-51 and 71-91; these read VWFV…LLVF and LGPW…LLTM.

It belongs to the CrgA family.

It is found in the cell membrane. Its function is as follows. Involved in cell division. The protein is Cell division protein CrgA of Mycobacterium sp. (strain JLS).